We begin with the raw amino-acid sequence, 326 residues long: Phospho-N-acetylmuramoyl-pentapeptide-transferase (326 aa).

9 helical membrane-spanning segments follow: residues 3 to 23 (ISISAGIVTFLLTLVGIPAFI), 51 to 71 (TMGGLVFLIAAVVVSFLVALF), 79 to 99 (VGMILFILVLYGLVGFLDDFL), 115 to 135 (LALQLLGGVIFYLFYERGGDM), 138 to 158 (VFGYQVHLGIFYIIFALFWLV), 169 to 189 (GIDGLASISVVISLSAYGVIA), 195 to 215 (MDILLVIFAMIGGLLGFFVFN), 221 to 243 (VFMGDVGSLALGGMLAAISMALH), and 306 to 326 (FFFWGVGLLASLLTFAILYLM).

This sequence belongs to the glycosyltransferase 4 family. MraY subfamily. Mg(2+) is required as a cofactor.

The protein resides in the cell membrane. It carries out the reaction UDP-N-acetyl-alpha-D-muramoyl-L-alanyl-gamma-D-glutamyl-L-lysyl-D-alanyl-D-alanine + di-trans,octa-cis-undecaprenyl phosphate = Mur2Ac(oyl-L-Ala-gamma-D-Glu-L-Lys-D-Ala-D-Ala)-di-trans,octa-cis-undecaprenyl diphosphate + UMP. Its pathway is cell wall biogenesis; peptidoglycan biosynthesis. Its function is as follows. Catalyzes the initial step of the lipid cycle reactions in the biosynthesis of the cell wall peptidoglycan: transfers peptidoglycan precursor phospho-MurNAc-pentapeptide from UDP-MurNAc-pentapeptide onto the lipid carrier undecaprenyl phosphate, yielding undecaprenyl-pyrophosphoryl-MurNAc-pentapeptide, known as lipid I. The polypeptide is Phospho-N-acetylmuramoyl-pentapeptide-transferase (Streptococcus pneumoniae (strain Taiwan19F-14)).